The sequence spans 336 residues: tRNA N6-adenosine threonylcarbamoyltransferase (336 aa).

Fe cation is bound by residues H114 and H118. Residues 136-140 (LVSGG), D169, G182, D186, and N275 contribute to the substrate site. D302 contacts Fe cation.

It belongs to the KAE1 / TsaD family. Fe(2+) is required as a cofactor.

The protein resides in the cytoplasm. The catalysed reaction is L-threonylcarbamoyladenylate + adenosine(37) in tRNA = N(6)-L-threonylcarbamoyladenosine(37) in tRNA + AMP + H(+). Functionally, required for the formation of a threonylcarbamoyl group on adenosine at position 37 (t(6)A37) in tRNAs that read codons beginning with adenine. Is involved in the transfer of the threonylcarbamoyl moiety of threonylcarbamoyl-AMP (TC-AMP) to the N6 group of A37, together with TsaE and TsaB. TsaD likely plays a direct catalytic role in this reaction. The sequence is that of tRNA N6-adenosine threonylcarbamoyltransferase from Streptococcus agalactiae serotype V (strain ATCC BAA-611 / 2603 V/R).